The chain runs to 173 residues: uncharacterized protein (173 aa).

This sequence belongs to the ycf73 family.

It is found in the plastid. Its subcellular location is the chloroplast. This is an uncharacterized protein from Saccharum hybrid (Sugarcane).